Consider the following 494-residue polypeptide: 3-octaprenyl-4-hydroxybenzoate carboxy-lyase (494 aa).

Asn-172 contacts Mn(2+). Prenylated FMN contacts are provided by residues 175–177 (IYR), 189–191 (RWL), and 194–195 (RG). Residue Glu-238 coordinates Mn(2+). Asp-287 functions as the Proton donor in the catalytic mechanism.

It belongs to the UbiD family. As to quaternary structure, homohexamer. Prenylated FMN is required as a cofactor. It depends on Mn(2+) as a cofactor.

The protein resides in the cell membrane. It carries out the reaction a 4-hydroxy-3-(all-trans-polyprenyl)benzoate + H(+) = a 2-(all-trans-polyprenyl)phenol + CO2. It participates in cofactor biosynthesis; ubiquinone biosynthesis. Catalyzes the decarboxylation of 3-octaprenyl-4-hydroxy benzoate to 2-octaprenylphenol, an intermediate step in ubiquinone biosynthesis. The polypeptide is 3-octaprenyl-4-hydroxybenzoate carboxy-lyase (Erwinia tasmaniensis (strain DSM 17950 / CFBP 7177 / CIP 109463 / NCPPB 4357 / Et1/99)).